A 434-amino-acid chain; its full sequence is Maltoporin (434 aa).

An N-terminal signal peptide occupies residues 1–25 (MKMKAKWLPIAAAVTAALASQAAFA).

The protein belongs to the porin LamB (TC 1.B.3) family. Homotrimer formed of three 18-stranded antiparallel beta-barrels, containing three independent channels.

It is found in the cell outer membrane. The catalysed reaction is beta-maltose(in) = beta-maltose(out). In terms of biological role, involved in the transport of maltose and maltodextrins. This is Maltoporin from Aeromonas hydrophila.